Consider the following 1085-residue polypeptide: Cell wall protein IFF6 (1085 aa).

A signal peptide spans 1-19; it reads MLLKQIFLPFFVLFNAINA. Residues 339–1060 are disordered; sequence PSPGTDESSS…SSNSATIPEQ (722 aa). Residues 342–528 are compositionally biased toward low complexity; the sequence is GTDESSSLSS…QSSSGTGQSS (187 aa). Over residues 529-538 the composition is skewed to acidic residues; that stretch reads TEDEPIDSTE. Positions 539 to 828 are enriched in low complexity; sequence SDTSSATDSS…TVTNTATNTG (290 aa). N-linked (GlcNAc...) asparagine glycans are attached at residues Asn-659, Asn-782, Asn-854, Asn-860, Asn-864, Asn-874, Asn-882, Asn-886, Asn-890, Asn-896, Asn-900, Asn-910, Asn-924, Asn-932, Asn-938, Asn-952, Asn-960, Asn-964, Asn-968, Asn-976, Asn-980, Asn-992, Asn-996, Asn-1008, and Asn-1016. Positions 847-1010 are enriched in gly residues; the sequence is NNGGGSNNGS…GSGSGSGNGS (164 aa). Positions 1018–1028 are enriched in gly residues; it reads SGSGSGSGNGQ. Over residues 1031 to 1052 the composition is skewed to low complexity; sequence GIITSSIGQPGSSTSTQGPSSS. Asn-1062 is lipidated: GPI-anchor amidated asparagine. The propeptide at 1063–1085 is removed in mature form; that stretch reads SGNHIKFTLFNGLLIGLVPIVFM.

It belongs to the HYR1/IFF family. Post-translationally, the GPI-anchor is attached to the protein in the endoplasmic reticulum and serves to target the protein to the cell surface. There, the glucosamine-inositol phospholipid moiety is cleaved off and the GPI-modified mannoprotein is covalently attached via its lipidless GPI glycan remnant to the 1,6-beta-glucan of the outer cell wall layer.

The protein localises to the secreted. It localises to the cell wall. The protein resides in the membrane. Functionally, GPI-anchored cell wall protein involved in cell wall organization, hyphal growth, as well as in host-fungal interaction and virulence. The polypeptide is Cell wall protein IFF6 (IFF6) (Candida albicans (strain SC5314 / ATCC MYA-2876) (Yeast)).